A 380-amino-acid chain; its full sequence is MRIVADENIPLLDAFFAGFGEIRRLPGRSIDRAAVADADVLLVRSVTPVTREMLEGSPVRFVGTCTIGTDHLDLAYFQDAAIQWSSAPGCNARGVVDYVLGSLLTLAEIEGVDLRQRTYGVVGAGQVGGRLIAVLKALGWKVLVCDPPRQSAEGGDFVSLDEILQRCDVISLHTPLDKSGQSPTWHLLDEARLRQLRQGAWLINASRGAVVDNRALHDVMLEREDLQAVLDVWEGEPQVNVALADLCVIGTPHIAGYSLDGRQRGTAQIYQALCTFLDQPAAISLADLLPTPWLAQVSLDAATDPQWALNMLCRGVYDPRRDDADFRRSLTGDTASQRLAFDALRKHYPPRREIEGLKVHLEGESDTLTQLIRALGAVRV.

Substrate is bound by residues S45 and T66. Residues 126–127 (QV), D146, T174, 205–207 (ASR), and D231 each bind NAD(+). R207 is a catalytic residue. E236 is a catalytic residue. The active-site Proton donor is the H253. Residue G256 coordinates NAD(+). Residue Y257 coordinates substrate.

Belongs to the D-isomer specific 2-hydroxyacid dehydrogenase family. PdxB subfamily. In terms of assembly, homodimer.

The protein resides in the cytoplasm. It catalyses the reaction 4-phospho-D-erythronate + NAD(+) = (R)-3-hydroxy-2-oxo-4-phosphooxybutanoate + NADH + H(+). It participates in cofactor biosynthesis; pyridoxine 5'-phosphate biosynthesis; pyridoxine 5'-phosphate from D-erythrose 4-phosphate: step 2/5. Functionally, catalyzes the oxidation of erythronate-4-phosphate to 3-hydroxy-2-oxo-4-phosphonooxybutanoate. This chain is Erythronate-4-phosphate dehydrogenase, found in Pseudomonas syringae pv. tomato (strain ATCC BAA-871 / DC3000).